The chain runs to 272 residues: MDNIKIIVASDSIGETAELVARAGVSQFNPKQCKHEFLRYPYIESFENVDEVIQVAKDTNAIIVYTLIKPEIKKYMISKVNEHALKSVDIMGPLMELLSNSIEETPYYEPGMVHRLDDAYFKKIDAIEFAVKYDDGKDPKGLPKADIVLLGISRTSKTPLSQYLAHKSYKVMNIPIVPEVTPPDGLFNVDPSKCIALKISEEKLNRIRKERLKQLGLGDKARYATEARIQEELDYFEKLVDKIGCPVIDVSDKAIEETANDIIHFIEQNKSK.

ADP is bound at residue Gly151 to Thr158.

Belongs to the pyruvate, phosphate/water dikinase regulatory protein family. PDRP subfamily.

It catalyses the reaction N(tele)-phospho-L-histidyl/L-threonyl-[pyruvate, phosphate dikinase] + ADP = N(tele)-phospho-L-histidyl/O-phospho-L-threonyl-[pyruvate, phosphate dikinase] + AMP + H(+). The enzyme catalyses N(tele)-phospho-L-histidyl/O-phospho-L-threonyl-[pyruvate, phosphate dikinase] + phosphate + H(+) = N(tele)-phospho-L-histidyl/L-threonyl-[pyruvate, phosphate dikinase] + diphosphate. Functionally, bifunctional serine/threonine kinase and phosphorylase involved in the regulation of the pyruvate, phosphate dikinase (PPDK) by catalyzing its phosphorylation/dephosphorylation. This is Putative pyruvate, phosphate dikinase regulatory protein 1 from Staphylococcus epidermidis (strain ATCC 35984 / DSM 28319 / BCRC 17069 / CCUG 31568 / BM 3577 / RP62A).